The sequence spans 647 residues: CRE-binding bZIP protein SKO1 (647 aa).

Disordered stretches follow at residues 1–119, 135–204, 305–331, and 353–429; these read MSSE…GSKR, STTN…QMPG, TPTTNTTDGTVNNSISNSNFSPNTSTK, and KENE…EEQE. A compositionally biased stretch (polar residues) spans 51-85; the sequence is RNNSTSTITQHSQRSTHSLNSIPEENGNSTVTDNS. S94 is subject to Phosphoserine. A Phosphothreonine modification is found at T113. Low complexity-rich tracts occupy residues 138 to 194 and 305 to 329; these read NPSQ…SGNG and TPTTNTTDGTVNNSISNSNFSPNTS. Polar residues-rich tracts occupy residues 357-368 and 396-405; these read NLTTQIENNDQF and RKNSAVTTAP. Residue S399 is modified to Phosphoserine. A bZIP domain is found at 429 to 492; it reads ERKRKEFLER…PSSSSNSQFN (64 aa). The interval 430 to 451 is basic motif; that stretch reads RKRKEFLERNRVAASKFRKRKK. The tract at residues 454-461 is leucine-zipper; sequence IKKIENDL. Residue S558 is modified to Phosphoserine.

It belongs to the bZIP family.

The protein resides in the nucleus. In terms of biological role, binds to the CRE motif 5'-TGACGTCA-3' and acts as a repressor of transcription of the SUC2 gene and most probably other genes. The chain is CRE-binding bZIP protein SKO1 (SKO1) from Saccharomyces cerevisiae (strain ATCC 204508 / S288c) (Baker's yeast).